A 754-amino-acid chain; its full sequence is Ribosomal RNA large subunit methyltransferase K/L (754 aa).

The THUMP domain occupies 46-157; sequence TAYRLCLWSR…RGEAILSLDL (112 aa).

This sequence belongs to the methyltransferase superfamily. RlmKL family.

It localises to the cytoplasm. The enzyme catalyses guanosine(2445) in 23S rRNA + S-adenosyl-L-methionine = N(2)-methylguanosine(2445) in 23S rRNA + S-adenosyl-L-homocysteine + H(+). It catalyses the reaction guanosine(2069) in 23S rRNA + S-adenosyl-L-methionine = N(2)-methylguanosine(2069) in 23S rRNA + S-adenosyl-L-homocysteine + H(+). In terms of biological role, specifically methylates the guanine in position 2445 (m2G2445) and the guanine in position 2069 (m7G2069) of 23S rRNA. In Pseudomonas fluorescens (strain ATCC BAA-477 / NRRL B-23932 / Pf-5), this protein is Ribosomal RNA large subunit methyltransferase K/L.